Reading from the N-terminus, the 141-residue chain is ATP synthase epsilon chain (141 aa).

The protein belongs to the ATPase epsilon chain family. As to quaternary structure, F-type ATPases have 2 components, CF(1) - the catalytic core - and CF(0) - the membrane proton channel. CF(1) has five subunits: alpha(3), beta(3), gamma(1), delta(1), epsilon(1). CF(0) has three main subunits: a, b and c.

It is found in the cell inner membrane. In terms of biological role, produces ATP from ADP in the presence of a proton gradient across the membrane. This is ATP synthase epsilon chain from Burkholderia multivorans (strain ATCC 17616 / 249).